We begin with the raw amino-acid sequence, 560 residues long: Oxygen-dependent choline dehydrogenase (560 aa).

6–35 (DYIIIGGGSAGSVLGGRLSEDVSNNVLVLE) provides a ligand contact to FAD. The active-site Proton acceptor is H472.

This sequence belongs to the GMC oxidoreductase family. It depends on FAD as a cofactor.

The catalysed reaction is choline + A = betaine aldehyde + AH2. The enzyme catalyses betaine aldehyde + NAD(+) + H2O = glycine betaine + NADH + 2 H(+). It participates in amine and polyamine biosynthesis; betaine biosynthesis via choline pathway; betaine aldehyde from choline (cytochrome c reductase route): step 1/1. Involved in the biosynthesis of the osmoprotectant glycine betaine. Catalyzes the oxidation of choline to betaine aldehyde and betaine aldehyde to glycine betaine at the same rate. The polypeptide is Oxygen-dependent choline dehydrogenase (Staphylococcus xylosus).